The primary structure comprises 480 residues: Cytochrome P450 monooxygenase ORF11 (480 aa).

A helical transmembrane segment spans residues 9–29; that stretch reads LLLLPHLSALTPKTGFLIGLA. N-linked (GlcNAc...) asparagine glycans are attached at residues asparagine 265 and asparagine 352. Heme is bound at residue cysteine 449.

The protein belongs to the cytochrome P450 family. Requires heme as cofactor.

The protein localises to the membrane. It functions in the pathway sesquiterpene biosynthesis. In terms of biological role, cytochrome P450 monooxygenase; part of the gene cluster that mediates the biosynthesis of PR-toxin, a bicyclic sesquiterpene belonging to the eremophilane class and acting as a mycotoxin. The first step of the pathway is catalyzed by the aristolochene synthase which performs the cyclization of trans,trans-farnesyl diphosphate (FPP) to the bicyclic sesquiterpene aristolochene. Following the formation of aristolochene, the non-oxygenated aristolochene is converted to the trioxygenated intermediate eremofortin B, via 7-epi-neopetasone. This conversion appears to involve three enzymes, a hydroxysterol oxidase-like enzyme, the quinone-oxidase prx3 that forms the quinone-type-structure in the bicyclic nucleus of aristolochene with the C8-oxo group and the C-3 hydroxyl group, and the P450 monooxygenase ORF6 that introduces the epoxide at the double bond between carbons 1 and 2. No monoxy or dioxy-intermediates have been reported to be released to the broth, so these three early oxidative reactions may be coupled together. Eremofortin B is further oxidized by another P450 monooxygenase, that introduces a second epoxide between carbons 7 and 11 prior to acetylation to eremofortin A by the acetyltransferase ORF8. The second epoxidation may be performed by a second P450 monooxygenase. After the acetylation step, eremofortin A is converted to eremofortin C and then to PR-toxin. First the conversion of eremofortin A to eremofortin C proceeds by oxidation of the side chain of the molecule at C-12 and is catalyzed by the short-chain oxidoreductase prx1. The cytochrome P450 monooxygenase ORF6 is probably also involved in this step. The primary alcohol formed at C-12 is finally oxidized by the short-chain alcohol dehydrogenase prx4 that forms PR-toxin. The sequence is that of Cytochrome P450 monooxygenase ORF11 from Penicillium roqueforti (strain FM164).